The following is a 1366-amino-acid chain: DNA-directed RNA polymerase subunit beta'' (1366 aa).

Positions 220, 291, 298, and 301 each coordinate Zn(2+).

It belongs to the RNA polymerase beta' chain family. RpoC2 subfamily. In terms of assembly, in plastids the minimal PEP RNA polymerase catalytic core is composed of four subunits: alpha, beta, beta', and beta''. When a (nuclear-encoded) sigma factor is associated with the core the holoenzyme is formed, which can initiate transcription. The cofactor is Zn(2+).

It localises to the plastid. It is found in the chloroplast. It carries out the reaction RNA(n) + a ribonucleoside 5'-triphosphate = RNA(n+1) + diphosphate. In terms of biological role, DNA-dependent RNA polymerase catalyzes the transcription of DNA into RNA using the four ribonucleoside triphosphates as substrates. The sequence is that of DNA-directed RNA polymerase subunit beta'' from Phaseolus vulgaris (Kidney bean).